Here is a 603-residue protein sequence, read N- to C-terminus: Polypeptide N-acetylgalactosaminyltransferase 10 (603 aa).

The Cytoplasmic segment spans residues 1–11; it reads MRRKEKRLLQA. A helical; Signal-anchor for type II membrane protein membrane pass occupies residues 12 to 31; the sequence is VALALAALVLLPNVGLWALY. Residues 32–603 are Lumenal-facing; sequence RERQPDGSPG…STVLENFNRN (572 aa). Residues Asn124 and Asn146 are each glycosylated (N-linked (GlcNAc...) asparagine). Disulfide bonds link Cys135–Cys365, Cys356–Cys432, Cys471–Cys488, Cys523–Cys538, and Cys563–Cys578. Positions 144–253 are catalytic subdomain A; the sequence is LPNTSIIIPF…VNWLPPLLDR (110 aa). Substrate contacts are provided by Asp185 and Arg214. Asp237 contributes to the Mn(2+) binding site. Position 238 (Ser238) interacts with substrate. Position 239 (His239) interacts with Mn(2+). The catalytic subdomain B stretch occupies residues 311-373; sequence PFESPVMAGG…PCSRVGHIYR (63 aa). Trp342 provides a ligand contact to substrate. His370 contributes to the Mn(2+) binding site. Residues Arg373 and Tyr378 each coordinate substrate. The segment at 373-384 is flexible loop; the sequence is RKYVPYKVPAGV. The region spanning 458-590 is the Ricin B-type lectin domain; the sequence is AAWGEIRNVG…SSLTQQWLFE (133 aa). Asn593 carries N-linked (GlcNAc...) asparagine glycosylation.

This sequence belongs to the glycosyltransferase 2 family. GalNAc-T subfamily. It depends on Mn(2+) as a cofactor. Highly expressed in the sublingual gland, testis, small intestine, colon and ovary. Expressed at intermediate level in heart, brain, spleen, lung, stomach, cervix and uterus.

Its subcellular location is the golgi apparatus membrane. It carries out the reaction L-seryl-[protein] + UDP-N-acetyl-alpha-D-galactosamine = a 3-O-[N-acetyl-alpha-D-galactosaminyl]-L-seryl-[protein] + UDP + H(+). The enzyme catalyses L-threonyl-[protein] + UDP-N-acetyl-alpha-D-galactosamine = a 3-O-[N-acetyl-alpha-D-galactosaminyl]-L-threonyl-[protein] + UDP + H(+). It functions in the pathway protein modification; protein glycosylation. Its function is as follows. Catalyzes the initial reaction in O-linked oligosaccharide biosynthesis, the transfer of an N-acetyl-D-galactosamine residue to a serine or threonine residue on the protein receptor. Has activity toward Muc5Ac and EA2 peptide substrates. The polypeptide is Polypeptide N-acetylgalactosaminyltransferase 10 (Galnt10) (Rattus norvegicus (Rat)).